We begin with the raw amino-acid sequence, 362 residues long: MRRPMIASLLLDTLPLAQMPKVTTALLIGALVIFAGIVVVLFIFTSYFGLWIQSVLTGSKISFGNLIGMTFRKVNTRAIVRSKIMATQAGLDDPELTVGALEAHYLAGGNVQQVIRALIAAKKAKTISLTFREATAIDLAGRDVLESVQTSVYPKVIDCPPRGSAKPSLDAVAKDGIQLKVRARVTVRANLQQLIGGATEETIIARVGEGIVSAIGSADDHKAVLENPDVISKAVLVKKLDSQTAFEIVSIDIADIDVGANIGARLQADQAEADTAVARANAEGRRAAAVAEEQEMQAEIAKSQAQVVEAQSDVPRAMAEAFRSGKLLVMDYYRLQNVSADTEMRRALAGHSHDPDTPEETH.

Residues 24-44 (TALLIGALVIFAGIVVVLFIF) traverse the membrane as a helical segment.

The protein belongs to the flotillin-like FloA family. As to quaternary structure, homooligomerizes.

The protein resides in the cell membrane. The protein localises to the membrane raft. Found in functional membrane microdomains (FMM) that may be equivalent to eukaryotic membrane rafts. FMMs are highly dynamic and increase in number as cells age. Flotillins are thought to be important factors in membrane fluidity. The chain is Flotillin-like protein FloA 2 from Rhodopirellula baltica (strain DSM 10527 / NCIMB 13988 / SH1).